Here is a 1432-residue protein sequence, read N- to C-terminus: Probable ATP-dependent RNA helicase spindle-E (1432 aa).

The region spanning 124–291 (LAAINAHPVV…FTTTNSVPPV (168 aa)) is the Helicase ATP-binding domain. 137-144 (GQTGCGKT) contributes to the ATP binding site. Residues 237–240 (DEVH) carry the DEAH box motif. One can recognise a Helicase C-terminal domain in the interval 337 to 524 (KIIMVIDNME…NSVLRAKELE (188 aa)). A Tudor domain is found at 936–999 (AGAITKGMMV…RLMPKELIQQ (64 aa)).

This sequence belongs to the DEAD box helicase family. DEAH subfamily.

It is found in the cytoplasm. The enzyme catalyses ATP + H2O = ADP + phosphate + H(+). Functionally, probable ATP-binding RNA helicase which plays a central role during spermatogenesis and oogenesis by repressing transposable elements and preventing their mobilization, which is essential for the germline integrity. Acts via the piRNA metabolic process, which mediates the repression of transposable elements during meiosis by forming complexes composed of piRNAs and Piwi and govern the methylation and subsequent repression of transposons. Involved in the repression of LTR retrotransposon copia. Also involved in telomere regulation by repressing specialized telomeric retroelements HeT-A, TAHRE, and TART; Drosophila telomeres being maintained by transposition of specialized telomeric retroelements. Involved in telomeric trans-silencing, a repression mechanism by which a transposon or a transgene inserted in subtelomeric heterochromatin has the capacity to repress in trans in the female germline, a homologous transposon, or transgene located in euchromatin. Involved in the repression of testis-expressed Stellate genes by the homologous Su(Ste) repeats. Required for anteroposterior and dorsoventral axis formation during oogenesis. This Drosophila erecta (Fruit fly) protein is Probable ATP-dependent RNA helicase spindle-E (spn-E).